A 180-amino-acid chain; its full sequence is uncharacterized protein (180 aa).

A signal peptide spans methionine 1 to alanine 22. Cysteine 41 and cysteine 81 form a disulfide bridge.

Belongs to the fimbrial protein family.

It localises to the fimbrium. This is an uncharacterized protein from Escherichia coli O157:H7.